We begin with the raw amino-acid sequence, 314 residues long: 4-hydroxyproline 2-epimerase (314 aa).

Cysteine 88 serves as the catalytic Proton acceptor. Substrate-binding positions include 89 to 90, histidine 208, and aspartate 232; that span reads GH. The active-site Proton donor is cysteine 236. Residue 237-238 participates in substrate binding; sequence GT.

Belongs to the proline racemase family. In terms of assembly, homodimer.

It carries out the reaction trans-4-hydroxy-L-proline = cis-4-hydroxy-D-proline. Inhibited by iodoacetate, iodoacetamide and by high amounts (10 mM) of pyrrole-2-carboxylate (PYC). Not inhibited by PYC at 1 mM. Functionally, allows intracellular utilization of 4-hydroxyproline, one of the major constituents of host collagen, by converting trans-4-hydroxy-L-proline (t4LHyp) to cis-4-hydroxy-D-proline (c4DHyp), which can be further metabolized by intracellular 4-hydroxy-D-proline oxidases. Strong B-cell mitogen. Plays an important role in the regulation of intra- and extracellular amino acid pools, allowing the bacterium to profit from host precursors and enzymatic pathways. Cannot use L-proline, trans-3-hydroxy-L-proline (t3LHyp) and pyrrolidone-5-carboxylate (P5C) as substrate. This chain is 4-hydroxyproline 2-epimerase, found in Pseudomonas aeruginosa (strain ATCC 15692 / DSM 22644 / CIP 104116 / JCM 14847 / LMG 12228 / 1C / PRS 101 / PAO1).